A 129-amino-acid chain; its full sequence is Fluoride-specific ion channel FluC 1 (129 aa).

4 consecutive transmembrane segments (helical) span residues 9–29 (LSVGIFAFFGGGLRAYLNLIW), 33–53 (GTLTANIIGCFLLAFFTYFFV), 62–82 (LVTGLSTGFVGSFTTFSSFNL), and 98–118 (IYFFSSIFIGFLFAYLGMLVG). Na(+) is bound by residues Gly-72 and Thr-75.

It belongs to the fluoride channel Fluc/FEX (TC 1.A.43) family.

Its subcellular location is the cell membrane. It catalyses the reaction fluoride(in) = fluoride(out). With respect to regulation, na(+) is not transported, but it plays an essential structural role and its presence is essential for fluoride channel function. Functionally, fluoride-specific ion channel. Important for reducing fluoride concentration in the cell, thus reducing its toxicity. This is Fluoride-specific ion channel FluC 1 from Lactobacillus johnsonii (strain CNCM I-12250 / La1 / NCC 533).